A 401-amino-acid polypeptide reads, in one-letter code: Riboflavin biosynthesis protein RibBA (401 aa).

Residues 1–203 form a DHBP synthase region; sequence MTDFQFSKVE…IQQLQEYRRK (203 aa). Residues 30–31, D35, 142–146, and E166 contribute to the D-ribulose 5-phosphate site; these read RE and RNGHT. E31 is a binding site for Mg(2+). H145 contributes to the Mg(2+) binding site. Residues 204–401 form a GTP cyclohydrolase II region; that stretch reads HDSLVKQISV…QIKMGHMFNF (198 aa). Position 254–258 (254–258) interacts with GTP; that stretch reads RIHSE. Zn(2+) contacts are provided by C259, C270, and C272. GTP contacts are provided by residues Q275, 297–299, and T319; that span reads EGR. D331 serves as the catalytic Proton acceptor; for GTP cyclohydrolase activity. R333 acts as the Nucleophile; for GTP cyclohydrolase activity in catalysis. T354 and K359 together coordinate GTP.

The protein in the N-terminal section; belongs to the DHBP synthase family. This sequence in the C-terminal section; belongs to the GTP cyclohydrolase II family. The cofactor is Mg(2+). It depends on Mn(2+) as a cofactor. Zn(2+) is required as a cofactor.

It carries out the reaction D-ribulose 5-phosphate = (2S)-2-hydroxy-3-oxobutyl phosphate + formate + H(+). The enzyme catalyses GTP + 4 H2O = 2,5-diamino-6-hydroxy-4-(5-phosphoribosylamino)-pyrimidine + formate + 2 phosphate + 3 H(+). It functions in the pathway cofactor biosynthesis; riboflavin biosynthesis; 2-hydroxy-3-oxobutyl phosphate from D-ribulose 5-phosphate: step 1/1. The protein operates within cofactor biosynthesis; riboflavin biosynthesis; 5-amino-6-(D-ribitylamino)uracil from GTP: step 1/4. Catalyzes the conversion of D-ribulose 5-phosphate to formate and 3,4-dihydroxy-2-butanone 4-phosphate. Functionally, catalyzes the conversion of GTP to 2,5-diamino-6-ribosylamino-4(3H)-pyrimidinone 5'-phosphate (DARP), formate and pyrophosphate. This chain is Riboflavin biosynthesis protein RibBA, found in Actinobacillus pleuropneumoniae serotype 7 (strain AP76).